Reading from the N-terminus, the 514-residue chain is Multifunctional alkaline phosphatase superfamily protein PehA (514 aa).

Residues D12, C57, D324, and H325 each coordinate Mn(2+). Catalysis depends on C57, which acts as the Nucleophile. The residue at position 57 (C57) is a 3-oxoalanine (Cys).

It belongs to the alkaline phosphatase superfamily. As to quaternary structure, homotetramer. Mn(2+) is required as a cofactor. Post-translationally, the conversion to 3-oxoalanine (also known as C-formylglycine, FGly), of a serine or cysteine residue in prokaryotes and of a cysteine residue in eukaryotes, is critical for catalytic activity. Phosphate triester hydrolytic activity is retained with unmodified cysteine acting as a nucleophile.

With respect to regulation, anions including Cl(-) and CH3COO(-), and SO4(2-) salts stimulate activity 20-40% at 100 mM. Functionally, hydrolytic enzyme with a broad substrate specificity acting on phosphate diesters and phosphonate monoesters. Hydrolyzes phosphate mono- and triesters, sulfate monoesters and sulfonate monoesters. Hydrolyzes glyphosate monoesters. Does not hydrolyze DNA or cGMP. Hydrolyzes glyceryl glyphosate, but this substrate has a much lower affinity than the glyphosate monoesters. The protein is Multifunctional alkaline phosphatase superfamily protein PehA of Trinickia caryophylli (Paraburkholderia caryophylli).